The primary structure comprises 203 residues: Dephospho-CoA kinase (203 aa).

The DPCK domain occupies 4-203 (VIGITGGIAT…EEGYIQSESE (200 aa)). 12–17 (ATGKST) serves as a coordination point for ATP.

This sequence belongs to the CoaE family.

The protein localises to the cytoplasm. The enzyme catalyses 3'-dephospho-CoA + ATP = ADP + CoA + H(+). Its pathway is cofactor biosynthesis; coenzyme A biosynthesis; CoA from (R)-pantothenate: step 5/5. In terms of biological role, catalyzes the phosphorylation of the 3'-hydroxyl group of dephosphocoenzyme A to form coenzyme A. The protein is Dephospho-CoA kinase of Staphylococcus epidermidis (strain ATCC 35984 / DSM 28319 / BCRC 17069 / CCUG 31568 / BM 3577 / RP62A).